The chain runs to 123 residues: uncharacterized protein (123 aa).

Positions 35 to 100 are disordered; that stretch reads SQDHGDDPAE…SSGAPASQHC (66 aa). A compositionally biased stretch (basic and acidic residues) spans 37 to 48; it reads DHGDDPAERGRT. Over residues 85-97 the composition is skewed to low complexity; that stretch reads ALPASPSSGAPAS.

This is an uncharacterized protein from Homo sapiens (Human).